The chain runs to 385 residues: Galactokinase (385 aa).

Residue 34–37 (EHTD) participates in substrate binding. 124–130 (SAGLSSS) is an ATP binding site. Residues S130 and E162 each coordinate Mg(2+). D174 (proton acceptor) is an active-site residue. Y223 serves as a coordination point for substrate.

It belongs to the GHMP kinase family. GalK subfamily.

It is found in the cytoplasm. It carries out the reaction alpha-D-galactose + ATP = alpha-D-galactose 1-phosphate + ADP + H(+). It participates in carbohydrate metabolism; galactose metabolism. Functionally, catalyzes the transfer of the gamma-phosphate of ATP to D-galactose to form alpha-D-galactose-1-phosphate (Gal-1-P). The chain is Galactokinase from Pasteurella multocida (strain Pm70).